The primary structure comprises 517 residues: Synaptic vesicular amine transporter (517 aa).

The Cytoplasmic portion of the chain corresponds to 1 to 20 (MALSDLVLLRWLRDSRHSRK). A helical membrane pass occupies residues 21–41 (LILFIVFLALLLDNMLLTVVV). Residues 42-132 (PIIPSYLYSI…EDKDLLNENV (91 aa)) lie on the Extracellular side of the membrane. N-linked (GlcNAc...) asparagine glycans are attached at residues N56, N83, N84, N91, and N113. Residues 100–119 (ESPKATTTQHTVTNTTVPPD) are disordered. Residues 105 to 115 (TTTQHTVTNTT) show a composition bias toward low complexity. C120 and C327 are oxidised to a cystine. The helical transmembrane segment at 133–153 (QVGLLFASKATVQLLTNPFIG) threads the bilayer. The Cytoplasmic portion of the chain corresponds to 154–162 (LLTNRIGYP). The helical transmembrane segment at 163–183 (IPMFAGFCIMFISTVMFAFSS) threads the bilayer. Residues 184–192 (SYAFLLIAR) lie on the Extracellular side of the membrane. Residues 193–213 (SLQGIGSSCSSVAGMGMLASV) form a helical membrane-spanning segment. Topologically, residues 214-222 (YTDDEERGN) are cytoplasmic. The chain crosses the membrane as a helical span at residues 223–245 (AMGIALGGLAMGVLVGPPFGSVL). L231 and V235 together coordinate serotonin. Residues 246-251 (YEFVGK) are Extracellular-facing. The helical transmembrane segment at 252–274 (TAPFLVLAALVLLDGAIQLFVLQ) threads the bilayer. The Cytoplasmic portion of the chain corresponds to 275-294 (PSRVQPESQKGTPLTTLLKD). The helical transmembrane segment at 295-314 (PYILIAAGSICFANMGIAML) threads the bilayer. Serotonin-binding residues include N308, I311, E315, F337, and Y344. Over 315-331 (EPALPIWMMETMCSRKW) the chain is Extracellular. Residues 332–355 (QLGVAFLPASISYLIGTNIFGILA) form a helical membrane-spanning segment. At 356 to 360 (HKMGR) the chain is on the cytoplasmic side. Residues 361-381 (WLCALLGMIVVGISILCIPFA) traverse the membrane as a helical segment. Residues 382-392 (KNIYGLIAPNF) lie on the Extracellular side of the membrane. Residues 393-413 (GVGFAIGMVDSSMMPIMGYLV) traverse the membrane as a helical segment. D402 contributes to the serotonin binding site. Residues 414 to 417 (DLRH) lie on the Cytoplasmic side of the membrane. Residues 418–438 (VSVYGSVYAIADVAFCMGYAI) traverse the membrane as a helical segment. Residue Y436 participates in serotonin binding. At 439-443 (GPSAG) the chain is on the extracellular side. Residues 444 to 465 (GAIAKAIGFPWLMTIIGIIDIV) traverse the membrane as a helical segment. At 466 to 517 (FAPLCFFLRSPPAKEEKMAILMDHNCPIKTKMYTQNNVQPYPVGDDEESESD) the chain is on the cytoplasmic side. S514 and S516 each carry phosphoserine; by CK2.

The protein belongs to the major facilitator superfamily. Vesicular transporter family. As to quaternary structure, interacts with SLC6A3. As to expression, expressed in striata and substantia nigra.

The protein localises to the cytoplasmic vesicle. Its subcellular location is the secretory vesicle. It localises to the synaptic vesicle membrane. It is found in the secretory vesicle membrane. The protein resides in the cell projection. The protein localises to the axon. Its subcellular location is the dendrite. It catalyses the reaction serotonin(in) + 2 H(+)(out) = serotonin(out) + 2 H(+)(in). It carries out the reaction dopamine(in) + 2 H(+)(out) = dopamine(out) + 2 H(+)(in). The enzyme catalyses histamine(in) + 2 H(+)(out) = histamine(out) + 2 H(+)(in). Its activity is regulated as follows. Strongly inhibited by reserpine and tetrabenazine. Also inhibited to a lesser extent by ketanserin and fenfluramine. Reserpine and ketanserin inhibit by blocking the substrate-binding pocket. Tetrabenazine traps SLC18A2/VMAT2 in an occluded conformation and its inhibition is specific to SLC18A2/VMAT2 but not SLC18A1/VMAT1. Functionally, electrogenic antiporter that exchanges one cationic monoamine with two intravesicular protons across the membrane of secretory and synaptic vesicles. Uses the electrochemical proton gradient established by the V-type proton-pump ATPase to accumulate high concentrations of monoamines inside the vesicles prior to their release via exocytosis. Transports a variety of catecholamines such as dopamine, adrenaline and noradrenaline, histamine, and indolamines such as serotonin. Regulates the transvesicular monoaminergic gradient that determines the quantal size. Mediates somatodendritic dopamine release in hippocampal neurons, likely as part of a regulated secretory pathway that integrates retrograde synaptic signals. Acts as a primary transporter for striatal dopamine loading ensuring impulse-dependent release of dopamine at the synaptic cleft. Responsible for histamine and serotonin storage and subsequent corelease from mast cell granules. This is Synaptic vesicular amine transporter (Slc18a2) from Mus musculus (Mouse).